The sequence spans 804 residues: Phenylalanine--tRNA ligase beta subunit (804 aa).

Residues glycine 39–alanine 147 enclose the tRNA-binding domain. Residues glutamate 402 to valine 480 form the B5 domain. Positions 458, 464, 467, and 468 each coordinate Mg(2+). An FDX-ACB domain is found at serine 711–arginine 804.

It belongs to the phenylalanyl-tRNA synthetase beta subunit family. Type 1 subfamily. Tetramer of two alpha and two beta subunits. The cofactor is Mg(2+).

It localises to the cytoplasm. It carries out the reaction tRNA(Phe) + L-phenylalanine + ATP = L-phenylalanyl-tRNA(Phe) + AMP + diphosphate + H(+). This is Phenylalanine--tRNA ligase beta subunit from Syntrophus aciditrophicus (strain SB).